Consider the following 405-residue polypeptide: Tyrosine--tRNA ligase (405 aa).

Position 35 (Tyr-35) interacts with L-tyrosine. Residues 40 to 49 carry the 'HIGH' region motif; sequence ATSSSLHIGH. L-tyrosine is bound by residues Tyr-166 and Gln-170. The 'KMSKS' region signature appears at 226–230; it reads KMGKS. ATP is bound at residue Lys-229. Residues 340–404 enclose the S4 RNA-binding domain; that stretch reads VLLINLMLDS…VGKKKFLRIV (65 aa).

This sequence belongs to the class-I aminoacyl-tRNA synthetase family. TyrS type 1 subfamily. In terms of assembly, homodimer.

It is found in the cytoplasm. It catalyses the reaction tRNA(Tyr) + L-tyrosine + ATP = L-tyrosyl-tRNA(Tyr) + AMP + diphosphate + H(+). Catalyzes the attachment of tyrosine to tRNA(Tyr) in a two-step reaction: tyrosine is first activated by ATP to form Tyr-AMP and then transferred to the acceptor end of tRNA(Tyr). The sequence is that of Tyrosine--tRNA ligase from Borreliella afzelii (strain PKo) (Borrelia afzelii).